The primary structure comprises 212 residues: Suppressor of cytokine signaling 1 (212 aa).

Positions 1 to 55 (MVARNQVAADNAISPAAEPRRRSEPSSSSSSSSPAAPVRPRPCPAVPAPAPGDTH) are disordered. The segment covering 25 to 36 (PSSSSSSSSPAA) has biased composition (low complexity). The segment covering 37 to 50 (PVRPRPCPAVPAPA) has biased composition (pro residues). Residues 56 to 67 (FRTFRSHSDYRR) form a kinase inhibitory region (KIR) region. Residues 68-79 (ITRTSALLDACG) form an extended SH2 subdomain (ESS) region. One can recognise an SH2 domain in the interval 80 to 175 (FYWGPLSVHG…PLRQRRVRPL (96 aa)). The SOCS box domain occupies 162–211 (MLGAPLRQRRVRPLQELCRQRIVAAVGRENLARIPLNPVLRDYLSSFPFQ). Residues 174–183 (PLQELCRQRI) are interaction with Elongin BC complex.

The protein belongs to the SOCS1 family. As to quaternary structure, interacts with multiple activated proteins of the tyrosine kinase signaling pathway including JAK family kinases, TEC, KIT, GRB2 and VAV. Binding to JAKs is mediated through the KIR and SH2 domain to a phosphorylated tyrosine residue within the JAK JH1 domain. Binds the SH3 domain of GRB2 via diproline determinants in the N-terminus, and the N-terminal regulatory domain of VAV. Interacts with the Elongin BC complex (ELOB and ELOC). Component of an ECS CBC(SOCS1) E3 ubiquitin-protein ligase complex which contains Elongin BC, CUL5, RBX1 and SOCS1. Interacts (via SH2 domain and SOCS box) with TRIM8. Interacts with CUL2. Interacts with AXL and FGFR3. Interacts with INSR. Interacts with TRIM8. Interacts with DCUN1D1. Interacts with IFNGR1. In terms of tissue distribution, high expression in thymus. Lower expression in lung and spleen. Expressed in both Th1 and Th2 cells.

Its subcellular location is the nucleus. It is found in the cytoplasmic vesicle. It functions in the pathway protein modification; protein ubiquitination. In terms of biological role, essential negative regulator of type I and type II interferon (IFN) signaling, as well as that of other cytokines, including IL2, IL4, IL6 and leukemia inhibitory factor (LIF). Downregulates cytokine signaling by inhibiting the JAK/STAT signaling pathway. Acts by binding to JAK proteins and to IFNGR1 and inhibiting their kinase activity. In vitro, suppresses Tec protein-tyrosine activity. Regulates IFN-gamma (IFNG)-mediated sensory neuron survival. Probable substrate recognition component of an ECS (Elongin BC-CUL2/5-SOCS-box protein) E3 ubiquitin ligase complex which mediates the ubiquitination and subsequent proteasomal degradation of target proteins. The protein is Suppressor of cytokine signaling 1 of Mus musculus (Mouse).